Here is a 69-residue protein sequence, read N- to C-terminus: uncharacterized protein (69 aa).

Residues 1–15 lie on the Cytoplasmic side of the membrane; the sequence is MLLYIVIIVACIISK. Residues 16 to 36 form a helical membrane-spanning segment; that stretch reads LVPNEYWAIHLFFIIMIFMVY. Topologically, residues 37–69 are extracellular; sequence MYEKLDIHQKYQFWNYTMSGLSGHNVQVICKCY. The N-linked (GlcNAc...) asparagine; by host glycan is linked to Asn51.

This sequence belongs to the asfivirus X69R family.

Its subcellular location is the host membrane. This is an uncharacterized protein from Ornithodoros (relapsing fever ticks).